The sequence spans 92 residues: UPF0223 protein EF_2462 (92 aa).

The protein belongs to the UPF0223 family.

This chain is UPF0223 protein EF_2462, found in Enterococcus faecalis (strain ATCC 700802 / V583).